The chain runs to 87 residues: UPF0367 protein P9303_26451 (87 aa).

Belongs to the UPF0367 family.

This is UPF0367 protein P9303_26451 from Prochlorococcus marinus (strain MIT 9303).